The chain runs to 210 residues: A-kinase-interacting protein 1 (210 aa).

Disordered regions lie at residues 58-80 (HLEK…ERPP) and 136-162 (QRKD…EASQ).

In terms of assembly, interacts with PRKACA and RELA. Expressed at high levels in adult heart and at lower levels in brain, testis, ovary and skeletal muscle. Up-regulated in some breast cancer cell lines. Isoform 1 and isoform 3 are expressed in fetal brain.

Its subcellular location is the nucleus. Enhances NF-kappa-B transcriptional activity by regulating the nuclear localization of the NF-kappa-B subunit RELA and promoting the phosphorylation of RELA by PRKACA. Regulates the effect of the cAMP-dependent protein kinase signaling pathway on the NF-kappa-B activation cascade. The sequence is that of A-kinase-interacting protein 1 (AKIP1) from Homo sapiens (Human).